Here is a 1049-residue protein sequence, read N- to C-terminus: Retinoblastoma-like protein 1 (1049 aa).

Phosphothreonine occurs at positions 332, 369, and 385. Positions 385–584 (TPVASATQSV…WEALRASANK (200 aa)) are domain A. Positions 385 to 944 (TPVASATQSV…GRVKSFALKY (560 aa)) are pocket; binds T and E1A. The interval 585–779 (VPSCEEVIFP…TQDAPLTGIS (195 aa)) is spacer. 4 positions are modified to phosphoserine: Ser640, Ser650, Ser748, and Ser761. The tract at residues 780–944 (KPKRTGSLAL…GRVKSFALKY (165 aa)) is domain B. Phosphoserine is present on residues Ser959, Ser970, and Ser983. Position 992 is a phosphothreonine (Thr992). Residues Ser1004 and Ser1022 each carry the phosphoserine modification.

Belongs to the retinoblastoma protein (RB) family. Component of the DREAM complex (also named LINC complex) at least composed of E2F4, E2F5, LIN9, LIN37, LIN52, LIN54, MYBL1, MYBL2, RBL1, RBL2, RBBP4, TFDP1 and TFDP2. The complex exists in quiescent cells where it represses cell cycle-dependent genes. It dissociates in S phase when LIN9, LIN37, LIN52 and LIN54 form a subcomplex that binds to MYBL2. Interacts with AATF. Interacts with KDM5A. Interacts with KMT5B and KMT5C. Interacts with USP4. Interacts with RBBP9. Post-translationally, cell-cycle arrest properties are inactivated by phosphorylation on Thr-332, Ser-640, Ser-959 and Ser-970 by CDK4.

Its subcellular location is the nucleus. In terms of biological role, key regulator of entry into cell division. Directly involved in heterochromatin formation by maintaining overall chromatin structure and, in particular, that of constitutive heterochromatin by stabilizing histone methylation. Recruits and targets histone methyltransferases KMT5B and KMT5C, leading to epigenetic transcriptional repression. Controls histone H4 'Lys-20' trimethylation. Probably acts as a transcription repressor by recruiting chromatin-modifying enzymes to promoters. Potent inhibitor of E2F-mediated trans-activation. May act as a tumor suppressor. The chain is Retinoblastoma-like protein 1 from Rattus norvegicus (Rat).